Reading from the N-terminus, the 126-residue chain is Methylglyoxal synthase (126 aa).

Residues 1–126 (MAERQKIALI…ADRLLPVITE (126 aa)) form the MGS-like domain. Substrate contacts are provided by residues histidine 12, lysine 16, 38–41 (TGTT), and 59–60 (SG). Aspartate 65 serves as the catalytic Proton donor/acceptor. Histidine 92 contacts substrate.

This sequence belongs to the methylglyoxal synthase family.

It carries out the reaction dihydroxyacetone phosphate = methylglyoxal + phosphate. In terms of biological role, catalyzes the formation of methylglyoxal from dihydroxyacetone phosphate. The protein is Methylglyoxal synthase of Allorhizobium ampelinum (strain ATCC BAA-846 / DSM 112012 / S4) (Agrobacterium vitis (strain S4)).